A 480-amino-acid chain; its full sequence is F-box/LRR-repeat protein 14 (480 aa).

One can recognise an F-box domain in the interval 11 to 58; it reads DRQMDELPDHLVWDILSKLHTTDDRNSLSLSCKRFFSLDNEQRYSLRI. 15 LRR repeats span residues 61-86, 94-119, 120-144, 145-170, 171-196, 197-222, 229-257, 258-283, 284-309, 322-347, 355-379, 380-404, 405-429, 430-454, and 455-480; these read GLVP…EIIY, GKQV…TLSF, CTFI…KLNF, APRI…HLIR, CLNV…CIKN, CRAI…QFEV, MKVY…SLGN, CIIA…HLDM, CTGV…SLRV, TLRL…KISF, LFSF…SLDH, VCVF…ELVH, CQEV…KLSK, CLGV…VVED, and CPQV…SWMY.

The chain is F-box/LRR-repeat protein 14 (FBL14) from Arabidopsis thaliana (Mouse-ear cress).